The primary structure comprises 497 residues: Acetyl-coenzyme A carboxylase carboxyl transferase subunit beta, chloroplastic (497 aa).

The region spanning 230–497 (LWIQCENCYG…FFPLNQNSIK (268 aa)) is the CoA carboxyltransferase N-terminal domain. Zn(2+) is bound by residues C234, C237, C253, and C256. The C4-type zinc finger occupies 234–256 (CENCYGLNYKKFFRSKMNICEQC).

This sequence belongs to the AccD/PCCB family. As to quaternary structure, acetyl-CoA carboxylase is a heterohexamer composed of biotin carboxyl carrier protein, biotin carboxylase and 2 subunits each of ACCase subunit alpha and ACCase plastid-coded subunit beta (accD). It depends on Zn(2+) as a cofactor.

It is found in the plastid. The protein resides in the chloroplast stroma. It catalyses the reaction N(6)-carboxybiotinyl-L-lysyl-[protein] + acetyl-CoA = N(6)-biotinyl-L-lysyl-[protein] + malonyl-CoA. The protein operates within lipid metabolism; malonyl-CoA biosynthesis; malonyl-CoA from acetyl-CoA: step 1/1. In terms of biological role, component of the acetyl coenzyme A carboxylase (ACC) complex. Biotin carboxylase (BC) catalyzes the carboxylation of biotin on its carrier protein (BCCP) and then the CO(2) group is transferred by the transcarboxylase to acetyl-CoA to form malonyl-CoA. This chain is Acetyl-coenzyme A carboxylase carboxyl transferase subunit beta, chloroplastic, found in Platanus occidentalis (Sycamore).